A 1518-amino-acid chain; its full sequence is Putative cellulose synthase 2 (1518 aa).

A catalytic region spans residues 1–731 (MYGTWFTTGK…EEKLEKQSFV (731 aa)). The next 3 helical transmembrane spans lie at 24 to 44 (PVWV…SVRI), 71 to 91 (ITVF…VWRL), and 105 to 125 (LAVL…LSYF). Positions 144 to 237 (QWPSVDVFVP…FAVIFDCDHV (94 aa)) are catalytic subdomain A. Residue aspartate 186 is part of the active site. The substrate site is built by aspartate 233 and aspartate 235. Positions 314–374 (EAVMGIGGFA…GQRVRWARGM (61 aa)) are catalytic subdomain B. Residue aspartate 330 is part of the active site. 5 helical membrane-spanning segments follow: residues 404–424 (FLFA…LFLG), 427–447 (IIAA…FHSV), 465–485 (IYET…LLQP), 514–534 (ILAG…VWQF), and 543–563 (FILN…SIAV). One can recognise a PilZ domain in the interval 569–668 (QTRNAPRVSV…ERQVVSMVFG (100 aa)). Residues 732-1518 (LKPVPRSARH…IARDDLTGEL (787 aa)) are cyclic di-GMP binding domain. The interval 765–785 (APSPDQSGVTAETPFGDSNTG) is disordered. Over residues 768-785 (PDQSGVTAETPFGDSNTG) the composition is skewed to polar residues. A helical membrane pass occupies residues 1481–1501 (ALYLAGLAGAGLAALGVWAWL).

In the N-terminal section; belongs to the glycosyltransferase 2 family. It in the C-terminal section; belongs to the AcsB/BcsB family.

The protein resides in the cell inner membrane. It catalyses the reaction [(1-&gt;4)-beta-D-glucosyl](n) + UDP-alpha-D-glucose = [(1-&gt;4)-beta-D-glucosyl](n+1) + UDP + H(+). The protein operates within glycan metabolism; bacterial cellulose biosynthesis. In Komagataeibacter xylinus (Gluconacetobacter xylinus), this protein is Putative cellulose synthase 2 (bcsABII-A).